The chain runs to 155 residues: Cathelicidin-1 (155 aa).

The first 29 residues, 1 to 29, serve as a signal peptide directing secretion; sequence METPRASLSLGRWSLWLLLLGLALPSASA. Gln30 is subject to Pyrrolidone carboxylic acid. Residues 30 to 143 constitute a propeptide that is removed on maturation; it reads QALSYREAVL…KQPWAPPQAA (114 aa). 3 disulfides stabilise this stretch: Cys85–Cys96, Cys107–Cys124, and Cys146–Cys154.

This sequence belongs to the cathelicidin family. As to expression, large granules of neutrophils.

It is found in the secreted. Potent microbicidal activity; active against S.aureus and E.coli. This Bos taurus (Bovine) protein is Cathelicidin-1 (CATHL1).